Here is a 498-residue protein sequence, read N- to C-terminus: Glycerol kinase (498 aa).

An ADP-binding site is contributed by Thr12. Positions 12, 13, and 14 each coordinate ATP. Thr12 contacts sn-glycerol 3-phosphate. Position 16 (Arg16) interacts with ADP. Residues Arg82, Glu83, Tyr134, and Asp243 each contribute to the sn-glycerol 3-phosphate site. The glycerol site is built by Arg82, Glu83, Tyr134, Asp243, and Gln244. Residues Thr265 and Gly308 each contribute to the ADP site. Residues Thr265, Gly308, Gln312, and Gly411 each coordinate ATP. Gly411 serves as a coordination point for ADP.

This sequence belongs to the FGGY kinase family.

The catalysed reaction is glycerol + ATP = sn-glycerol 3-phosphate + ADP + H(+). The protein operates within polyol metabolism; glycerol degradation via glycerol kinase pathway; sn-glycerol 3-phosphate from glycerol: step 1/1. Its activity is regulated as follows. Inhibited by fructose 1,6-bisphosphate (FBP). In terms of biological role, key enzyme in the regulation of glycerol uptake and metabolism. Catalyzes the phosphorylation of glycerol to yield sn-glycerol 3-phosphate. The polypeptide is Glycerol kinase (Brucella suis biovar 1 (strain 1330)).